The primary structure comprises 595 residues: ATP-dependent lipid A-core flippase (595 aa).

Positions 1 to 20 (MSQAYQPDSTKTSAKKSSAV) are disordered. The span at 9–19 (STKTSAKKSSA) shows a compositional bias: low complexity. 4 helical membrane passes run 41-61 (WWAILLTITGFAINAGTEIWI), 81-101 (GLFPFIIVMLFFVRGVGSFLG), 169-189 (VIALMGFLLYSNWRLTLILFV), and 266-286 (INTPAVQLLMAVAMAVVVWLA). Positions 45–326 (LLTITGFAIN…LTDVNQQLQR (282 aa)) constitute an ABC transmembrane type-1 domain. The ABC transporter domain maps to 357-592 (IKLDNISLVY…HGHYAQMYAR (236 aa)). 390-397 (GRSGAGKS) contributes to the ATP binding site.

This sequence belongs to the ABC transporter superfamily. Lipid exporter (TC 3.A.1.106) family. In terms of assembly, homodimer.

Its subcellular location is the cell inner membrane. It carries out the reaction ATP + H2O + lipid A-core oligosaccharideSide 1 = ADP + phosphate + lipid A-core oligosaccharideSide 2.. Involved in lipopolysaccharide (LPS) biosynthesis. Translocates lipid A-core from the inner to the outer leaflet of the inner membrane. Transmembrane domains (TMD) form a pore in the inner membrane and the ATP-binding domain (NBD) is responsible for energy generation. The sequence is that of ATP-dependent lipid A-core flippase from Psychrobacter arcticus (strain DSM 17307 / VKM B-2377 / 273-4).